Consider the following 108-residue polypeptide: Movement protein TGB2 (108 aa).

Residues 1–8 (MPLTPPPD) lie on the Cytoplasmic side of the membrane. The chain crosses the membrane as a helical span at residues 9–29 (YTKPFIAVVVGGTLAAFVLLL). Residues 30 to 71 (TRNTLPHTGDNLHSLPHGGTYCDGTKRIRYGGPHRSHVPELP) lie on the Lumenal side of the membrane. A helical transmembrane segment spans residues 72–92 (AKSWALITVVAILIALHFSCL). Residues 93 to 108 (RTHRVHRCVLCHTTSG) lie on the Cytoplasmic side of the membrane.

The protein belongs to the Tymovirales TGBp2 protein family.

It is found in the host endoplasmic reticulum membrane. In terms of biological role, plays a role in viral cell-to-cell propagation, by facilitating genome transport to neighboring plant cells through plasmosdesmata,. The sequence is that of Movement protein TGB2 from Lily virus X.